The following is a 121-amino-acid chain: Small ribosomal subunit protein uS13 (121 aa).

The disordered stretch occupies residues 94–121 (GLPLRGQRTRTNARTRKGPRRAAQALKK).

It belongs to the universal ribosomal protein uS13 family. Part of the 30S ribosomal subunit. Forms a loose heterodimer with protein S19. Forms two bridges to the 50S subunit in the 70S ribosome.

Its function is as follows. Located at the top of the head of the 30S subunit, it contacts several helices of the 16S rRNA. In the 70S ribosome it contacts the 23S rRNA (bridge B1a) and protein L5 of the 50S subunit (bridge B1b), connecting the 2 subunits; these bridges are implicated in subunit movement. Contacts the tRNAs in the A and P-sites. The sequence is that of Small ribosomal subunit protein uS13 from Burkholderia mallei (strain NCTC 10247).